A 102-amino-acid polypeptide reads, in one-letter code: Glutaredoxin 1 (102 aa).

Residues 1 to 96 (MNKAILHTII…KLLENQPKTT (96 aa)) enclose the Glutaredoxin domain. Cysteines 17 and 20 form a disulfide.

It belongs to the glutaredoxin family. In terms of assembly, monomer.

Its subcellular location is the cytoplasm. Its function is as follows. Has a glutathione-disulfide oxidoreductase activity in the presence of NADPH and glutathione reductase. Reduces low molecular weight disulfides and proteins. The polypeptide is Glutaredoxin 1 (grxC1) (Rickettsia conorii (strain ATCC VR-613 / Malish 7)).